A 324-amino-acid polypeptide reads, in one-letter code: Probable pectinesterase A (324 aa).

Positions 1 to 19 are cleaved as a signal peptide; it reads MHGSLLKLALLSFSLGSSA. Gln142 lines the substrate pocket. Asp165 acts as the Proton donor in catalysis. The Nucleophile role is filled by Asp186. Arg246 and Trp248 together coordinate substrate. Asn285 is a glycosylation site (N-linked (GlcNAc...) asparagine).

This sequence belongs to the pectinesterase family.

The protein resides in the secreted. The catalysed reaction is [(1-&gt;4)-alpha-D-galacturonosyl methyl ester](n) + n H2O = [(1-&gt;4)-alpha-D-galacturonosyl](n) + n methanol + n H(+). The protein operates within glycan metabolism; pectin degradation; 2-dehydro-3-deoxy-D-gluconate from pectin: step 1/5. Involved in maceration and soft-rotting of plant tissue. This is Probable pectinesterase A (pmeA) from Aspergillus oryzae (strain ATCC 42149 / RIB 40) (Yellow koji mold).